The following is a 267-amino-acid chain: uncharacterized protein (267 aa).

The interval 1 to 55 (MTEERKETFEEEINQSERIDADEEPLSRMSRKASRQSKQKQKQKQKPRQERGEST) is disordered. Positions 9 to 24 (FEEEINQSERIDADEE) are enriched in acidic residues. Over residues 29 to 46 (MSRKASRQSKQKQKQKQK) the composition is skewed to basic residues. A run of 5 helical transmembrane segments spans residues 93-115 (YKYGLISMLIFSIIFSIGNWFQL), 135-157 (GFLVVLVYLLIFFAVMVFAIWAV), 173-195 (AVLGSLLVPVIAVSILWLIFAIV), 199-221 (MLTVLFTVLILFSIFFIIALYVQ), and 234-256 (YIYCVFAVVAIALLFTAVTWPFI).

It localises to the cell membrane. This is an uncharacterized protein from Bacillus subtilis (strain 168).